A 309-amino-acid chain; its full sequence is MVRVYAPASSANMSVGFDVLGAAVTPIDGSLLGDVVGVEAADSFSLQNLGRFASKLPSKPRENIVYQCWERFCQELGKQIPVAMTLEKNMPIGSGLGSSACSVVAALVAMNEYCGKPLNDTRLLAIMGELEGRISGSIHYDNVAPCFLGGMQLMIEENGIISQQVPGFDEWLWVLAYPGIKVSTAEARAILPAQYRRQDCIAHGRHLAGFIHACYSRQPLLAAKLMKDVIAEPYRERLLPGFSQARQAVAEIGAVASGISGSGPTLFALCDKPDTAQRVAEWLAKNYLQNQEGFVHICRLDTAGARVLE.

Residue 91-101 (PIGSGLGSSAC) coordinates ATP.

Belongs to the GHMP kinase family. Homoserine kinase subfamily.

It is found in the cytoplasm. The enzyme catalyses L-homoserine + ATP = O-phospho-L-homoserine + ADP + H(+). It participates in amino-acid biosynthesis; L-threonine biosynthesis; L-threonine from L-aspartate: step 4/5. Functionally, catalyzes the ATP-dependent phosphorylation of L-homoserine to L-homoserine phosphate. The chain is Homoserine kinase from Escherichia fergusonii (strain ATCC 35469 / DSM 13698 / CCUG 18766 / IAM 14443 / JCM 21226 / LMG 7866 / NBRC 102419 / NCTC 12128 / CDC 0568-73).